A 519-amino-acid chain; its full sequence is Na(+)/H(+) exchange regulatory cofactor NHE-RF3 (519 aa).

PDZ domains lie at 9–90 (ECKL…LDGD), 134–215 (RLCY…VDKE), and 243–323 (IVEM…VDKE). Ser-148, Ser-192, Ser-250, Ser-334, and Ser-348 each carry phosphoserine. The disordered stretch occupies residues 347-374 (GSVKEAPAPTPTSLEVSSPPDTTEEVDH). Residues 357 to 367 (PTSLEVSSPPD) show a composition bias toward polar residues. The 81-residue stretch at 378 to 458 (LCRLAKGENG…NVTLLVCGKK (81 aa)) folds into the PDZ 4 domain. Phosphothreonine is present on Thr-451. The interval 473 to 519 (SLADPPDTPPDSKEGIVVESKHDSHMAKERAHSTASHSSSNSEDTEM) is disordered. Residues 482-504 (PDSKEGIVVESKHDSHMAKERAH) are compositionally biased toward basic and acidic residues. Phosphoserine occurs at positions 492, 508, 510, 511, 512, and 514. Over residues 505–519 (STASHSSSNSEDTEM) the composition is skewed to low complexity.

It belongs to the NHER family. As to quaternary structure, interacts with PDZK1IP1 and ABCC2. Binds to the C-terminal region of SLC26A3. Interacts (via PDZ domains 1 and 3) with SCARB1 (C-terminal domain). Forms a heterodimeric complex with NHERF1. Interacts with AKAP2, BCR, CFTR, SLCO1A1, SLC22A12, SLC22A4, SLC22A5, NHERF2 and SLC17A1. Component of a complex, composed of PDZK1, SYNGAP1, KLHL17 and NMDA receptors. Interacts (via PDZ1 domain) directly with KLHL17; the interaction is important for integrity of actin cytoskeleton structures in neurons. Interacts (via C-terminal PDZ domain) with SLC26A6 (via C-terminal domain). Interacts (via C-terminal PDZ domain) with SLC9A3 (via C-terminal domain). Interacts (via the first PDZ domain) with PTGIR (via non-isoprenylated C-terminus). Interacts (via PDZ domains 1 and 3) with SLC5A8 (via PDZ-binding motif); interaction increases nicotinate transport activity of SLC5A8.

It localises to the membrane. Its subcellular location is the cell membrane. In terms of biological role, a scaffold protein that connects plasma membrane proteins and regulatory components, regulating their surface expression in epithelial cells apical domains. May be involved in the coordination of a diverse range of regulatory processes for ion transport and second messenger cascades. In complex with NHERF1, may cluster proteins that are functionally dependent in a mutual fashion and modulate the trafficking and the activity of the associated membrane proteins. May play a role in the cellular mechanisms associated with multidrug resistance through its interaction with ABCC2 and PDZK1IP1. May potentiate the CFTR chloride channel activity. Required for normal cell-surface expression of SCARB1. Plays a role in maintaining normal plasma cholesterol levels via its effects on SCARB1. Plays a role in the normal localization and function of the chloride-anion exchanger SLC26A6 to the plasma membrane in the brush border of the proximal tubule of the kidney. May be involved in the regulation of proximal tubular Na(+)-dependent inorganic phosphate cotransport therefore playing an important role in tubule function. The chain is Na(+)/H(+) exchange regulatory cofactor NHE-RF3 (PDZK1) from Pongo abelii (Sumatran orangutan).